Here is a 253-residue protein sequence, read N- to C-terminus: ATP synthase subunit b 1 (253 aa).

A helical membrane pass occupies residues 5–27; it reads GWTVALQAVNFLILVLLLRHFLY.

Belongs to the ATPase B chain family. In terms of assembly, F-type ATPases have 2 components, F(1) - the catalytic core - and F(0) - the membrane proton channel. F(1) has five subunits: alpha(3), beta(3), gamma(1), delta(1), epsilon(1). F(0) has three main subunits: a(1), b(2) and c(10-14). The alpha and beta chains form an alternating ring which encloses part of the gamma chain. F(1) is attached to F(0) by a central stalk formed by the gamma and epsilon chains, while a peripheral stalk is formed by the delta and b chains.

Its subcellular location is the cell inner membrane. In terms of biological role, f(1)F(0) ATP synthase produces ATP from ADP in the presence of a proton or sodium gradient. F-type ATPases consist of two structural domains, F(1) containing the extramembraneous catalytic core and F(0) containing the membrane proton channel, linked together by a central stalk and a peripheral stalk. During catalysis, ATP synthesis in the catalytic domain of F(1) is coupled via a rotary mechanism of the central stalk subunits to proton translocation. Its function is as follows. Component of the F(0) channel, it forms part of the peripheral stalk, linking F(1) to F(0). This Rhodospirillum centenum (strain ATCC 51521 / SW) protein is ATP synthase subunit b 1.